The following is a 456-amino-acid chain: Bifunctional protein GlmU (456 aa).

The interval 1–229 (MLNSAMSVVI…ISETDGVNNR (229 aa)) is pyrophosphorylase. Residues 11 to 14 (LAAG), Lys-25, Gln-76, 81 to 82 (GT), 103 to 105 (YGD), Gly-140, Glu-154, Asn-169, and Asn-227 each bind UDP-N-acetyl-alpha-D-glucosamine. Mg(2+) is bound at residue Asp-105. Asn-227 lines the Mg(2+) pocket. Residues 230–250 (LQLSRLERIYQAEQAEKLLLS) are linker. Positions 251–456 (GVMLRDPARF…QGWQRPVKKK (206 aa)) are N-acetyltransferase. UDP-N-acetyl-alpha-D-glucosamine contacts are provided by Arg-333 and Lys-351. Residue His-363 is the Proton acceptor of the active site. UDP-N-acetyl-alpha-D-glucosamine is bound by residues Tyr-366 and Asn-377. Residues Ala-380, 386–387 (NY), Ser-405, Ala-423, and Arg-440 contribute to the acetyl-CoA site.

This sequence in the N-terminal section; belongs to the N-acetylglucosamine-1-phosphate uridyltransferase family. It in the C-terminal section; belongs to the transferase hexapeptide repeat family. As to quaternary structure, homotrimer. It depends on Mg(2+) as a cofactor.

The protein localises to the cytoplasm. It carries out the reaction alpha-D-glucosamine 1-phosphate + acetyl-CoA = N-acetyl-alpha-D-glucosamine 1-phosphate + CoA + H(+). The catalysed reaction is N-acetyl-alpha-D-glucosamine 1-phosphate + UTP + H(+) = UDP-N-acetyl-alpha-D-glucosamine + diphosphate. It participates in nucleotide-sugar biosynthesis; UDP-N-acetyl-alpha-D-glucosamine biosynthesis; N-acetyl-alpha-D-glucosamine 1-phosphate from alpha-D-glucosamine 6-phosphate (route II): step 2/2. The protein operates within nucleotide-sugar biosynthesis; UDP-N-acetyl-alpha-D-glucosamine biosynthesis; UDP-N-acetyl-alpha-D-glucosamine from N-acetyl-alpha-D-glucosamine 1-phosphate: step 1/1. Its pathway is bacterial outer membrane biogenesis; LPS lipid A biosynthesis. Catalyzes the last two sequential reactions in the de novo biosynthetic pathway for UDP-N-acetylglucosamine (UDP-GlcNAc). The C-terminal domain catalyzes the transfer of acetyl group from acetyl coenzyme A to glucosamine-1-phosphate (GlcN-1-P) to produce N-acetylglucosamine-1-phosphate (GlcNAc-1-P), which is converted into UDP-GlcNAc by the transfer of uridine 5-monophosphate (from uridine 5-triphosphate), a reaction catalyzed by the N-terminal domain. The chain is Bifunctional protein GlmU from Salmonella schwarzengrund (strain CVM19633).